The primary structure comprises 1033 residues: MAPPDSTHGGSFRDHLKTNDRSSTSKGKQRYSPLQEAIPEEISSFRSPSEYADTDSDSDLERSGSYKLRPVDRYGSHHSSAFIPVIREENGVETYLDSITEAEQELLSASKQYDLVDDDDSSDFDSDEEATLRYRLKDRLKRRRARLQAWQPVKYARIWWRTLLAVVVTLVVVVWGFLSFAVSHREEPTVWPMVPSDSWFPSPKGGTLKHWEESYKKAQSLVRNMTLVEKVNITTGIGWQMGLCVGNTGPADIVKFPSLCLQDGPQGLRFADHVSAFPAGITTGSTWNRELMRERGVAMGREARLKGVNVLLGPSMGPLGMMPAGGRNWEGFGSDPVLQAVAAAETIRGIQSNGVMATAKHFVMNEQEHFRQPFEWGIPTALSSNVGDRALHEVFAWPFAESIRADVASVMCSYQMVNNSHACENSKLLNGILKDELGFQGFVQSDWLAQRSGINSALGGLDMSMPGDGLHWVDGKSLWGSELTRAVLNTSVPVERLNDMVTRIVAAWYHLGQDTWERPPPEGNGGPNFSSWTNDEVGWLHTGSNDGSYARVNHYVDAQGTGPEAHSIIARKVAAEGTVLLKNVDRTLPLSRNASSPSGGILRVGIYGDDAGPALGPNACPDRGCNQGTLATGWGSGTVEFPYLVSPIEALESAWSTEIESTAYLRNAVMPADAVDKDLCLVFVNADSGEGYISAGGIHGDRNDLFLQKGGDTLVRTVSSNCGGGQGKTVVVIHAVGPVVMESWIDLPGVHAVLLANLPGQESGNALVDVLFGEVDASGRLPYTIGKSLEDYGPGAQVLYEPNAPVPQVDFLDALYIDYRHFDRHNITPRFEFGFGLSYTTFELLDLSISPLQQKSRSVPPRPADAVAPPVYDISLPDPASALFPAGFQPVFKYIYPYLSNLDGTAPHNYSFYPKGYNETQRPSPAGGGAGGHPALYEEMVSVKLQVSNTGDRKGQEVVQVYVSFPPDFPERVLRNFTKIELEPSERREVQMTLSRKDLSYWSTREQNWVMPEGKFQIWVGRSSRDLPLMGEY.

A disordered region spans residues 1 to 71; it reads MAPPDSTHGG…RSGSYKLRPV (71 aa). The Cytoplasmic portion of the chain corresponds to 1–161; the sequence is MAPPDSTHGG…PVKYARIWWR (161 aa). 2 stretches are compositionally biased toward basic and acidic residues: residues 11-20 and 59-71; these read SFRDHLKTND and DLER…LRPV. A helical; Signal-anchor for type II membrane protein transmembrane segment spans residues 162–182; that stretch reads TLLAVVVTLVVVVWGFLSFAV. The Extracellular segment spans residues 183 to 1033; it reads SHREEPTVWP…SRDLPLMGEY (851 aa). N-linked (GlcNAc...) asparagine glycosylation is found at Asn-224, Asn-232, and Asn-418. Asp-446 is a catalytic residue. 6 N-linked (GlcNAc...) asparagine glycosylation sites follow: Asn-489, Asn-528, Asn-593, Asn-909, Asn-918, and Asn-976.

Belongs to the glycosyl hydrolase 3 family.

It is found in the cell membrane. The enzyme catalyses Hydrolysis of terminal, non-reducing beta-D-glucosyl residues with release of beta-D-glucose.. It participates in glycan metabolism; cellulose degradation. Functionally, beta-glucosidases are one of a number of cellulolytic enzymes involved in the degradation of cellulosic biomass. Catalyzes the last step releasing glucose from the inhibitory cellobiose. The protein is Probable beta-glucosidase E (bglE) of Aspergillus fumigatus (strain CBS 144.89 / FGSC A1163 / CEA10) (Neosartorya fumigata).